The following is a 240-amino-acid chain: Ribonuclease PH (240 aa).

Residues Arg-87 and 125-127 (GTR) each bind phosphate.

It belongs to the RNase PH family. As to quaternary structure, homohexameric ring arranged as a trimer of dimers.

The enzyme catalyses tRNA(n+1) + phosphate = tRNA(n) + a ribonucleoside 5'-diphosphate. Its function is as follows. Phosphorolytic 3'-5' exoribonuclease that plays an important role in tRNA 3'-end maturation. Removes nucleotide residues following the 3'-CCA terminus of tRNAs; can also add nucleotides to the ends of RNA molecules by using nucleoside diphosphates as substrates, but this may not be physiologically important. Probably plays a role in initiation of 16S rRNA degradation (leading to ribosome degradation) during starvation. The sequence is that of Ribonuclease PH from Pseudomonas fluorescens (strain SBW25).